The following is a 126-amino-acid chain: 3-aminobutyryl-CoA ammonia lyase (126 aa).

Belongs to the KAL family. As to quaternary structure, homohexamer.

It carries out the reaction (3S)-3-aminobutanoyl-CoA = (2E)-butenoyl-CoA + NH4(+). It functions in the pathway amino-acid degradation; L-lysine degradation via acetate pathway. In terms of biological role, involved in the anaerobic fermentation of lysine. Catalyzes the deamination of L-3-aminobutyryl-CoA to produce crotonoyl-CoA. The sequence is that of 3-aminobutyryl-CoA ammonia lyase from Acetoanaerobium sticklandii (strain ATCC 12662 / DSM 519 / JCM 1433 / CCUG 9281 / NCIMB 10654 / HF) (Clostridium sticklandii).